The following is a 135-amino-acid chain: Ribosome-binding factor A (135 aa).

This sequence belongs to the RbfA family. In terms of assembly, monomer. Binds 30S ribosomal subunits, but not 50S ribosomal subunits or 70S ribosomes.

The protein resides in the cytoplasm. Functionally, one of several proteins that assist in the late maturation steps of the functional core of the 30S ribosomal subunit. Associates with free 30S ribosomal subunits (but not with 30S subunits that are part of 70S ribosomes or polysomes). Required for efficient processing of 16S rRNA. May interact with the 5'-terminal helix region of 16S rRNA. In Hyphomonas neptunium (strain ATCC 15444), this protein is Ribosome-binding factor A.